A 277-amino-acid chain; its full sequence is MIDTPLHTGLGLRRGLLPELLEMQAGEVDFLECAPENWIGVGGAFGQKLECLAERFPIACHGLSLSLGGTAPLDEAFLGLTRRFLDRHQVNLYSEHLSYCSDDGHLYDLLPIPFTEEAVHHVSARIRQAQDLLGRRIAVENISYYAAPYQAMSELDFIRAVLDEADCDLLLDVNNVFVNACNHRYEAHAFLAGIPRERVVGMHVAGHYDEAPDLKVDTHGAPVKEDVWALFARACERFGAQPTVLERDFNYPPLAELLAETARIRDLQQRHGGPRHG.

This sequence belongs to the UPF0276 family.

The chain is UPF0276 protein PSEEN3355 from Pseudomonas entomophila (strain L48).